A 735-amino-acid polypeptide reads, in one-letter code: Polyribonucleotide nucleotidyltransferase (735 aa).

Residues Asp-515 and Asp-521 each contribute to the Mg(2+) site. One can recognise a KH domain in the interval 581–641; the sequence is PKLELFSVDP…KNVDAAKDYI (61 aa). Residues 649 to 671 form a disordered region; sequence NSRGFGKKPHGHDRRDKDRQKPT. Residues 675–734 enclose the S1 motif domain; it reads GDEFDGVVKSVVDFGAFIELKDGVDGLLHISKIKTPLNVGDRLKVCVSEQKGNKISLSLV.

The protein belongs to the polyribonucleotide nucleotidyltransferase family. Mg(2+) is required as a cofactor.

The protein resides in the cytoplasm. The catalysed reaction is RNA(n+1) + phosphate = RNA(n) + a ribonucleoside 5'-diphosphate. Its function is as follows. Involved in mRNA degradation. Catalyzes the phosphorolysis of single-stranded polyribonucleotides processively in the 3'- to 5'-direction. This chain is Polyribonucleotide nucleotidyltransferase, found in Campylobacter curvus (strain 525.92).